Here is a 996-residue protein sequence, read N- to C-terminus: TBC1 domain family member 31 (996 aa).

7 WD repeats span residues 33 to 74 (HSTS…LHGN), 75 to 116 (RFNL…TVTK), 117 to 157 (ELVS…LDTF), 158 to 200 (QRKR…CDTL), 201 to 248 (FCKY…ATGL), 249 to 296 (FRII…IQTC), and 297 to 334 (KLLF…NVYS). A coiled-coil region spans residues 388 to 414 (TRVLKQDLTGDLENKENELSEGLNKKR). One can recognise a Rab-GAP TBC domain in the interval 424–599 (EYPTKYRMFI…RLFDNIFSNH (176 aa)). A coiled-coil region spans residues 699-844 (ELDFLRERQT…LTTSQEAVAK (146 aa)). A mediates direct interaction with PJA2 region spans residues 983–986 (RARN).

In terms of assembly, interacts with PJA2; the interaction is direct and recruits PJA2 to centrosomes. Interacts with OFD1; regulates its activity in cilium assembly. Interacts with PRKACA.

Its subcellular location is the cytoplasm. It is found in the cytoskeleton. It localises to the microtubule organizing center. The protein localises to the centrosome. The protein resides in the centriolar satellite. Its subcellular location is the cilium basal body. In terms of biological role, molecular adapter which is involved in cilium biogenesis. Part of a functional complex including OFD1 a centriolar protein involved in cilium assembly. Could regulate the cAMP-dependent phosphorylation of OFD1, and its subsequent ubiquitination by PJA2 which ultimately leads to its proteasomal degradation. In Mus musculus (Mouse), this protein is TBC1 domain family member 31.